We begin with the raw amino-acid sequence, 390 residues long: Transforming protein cbl (390 aa).

The segment at 1–52 (ASAGGGCRRGPSFSPGSIPSLAAERAPDPPLAMAGNVKKSSGAGGGGSGGSG) is disordered. The segment covering 42 to 52 (GAGGGGSGGSG) has biased composition (gly residues). The tract at residues 77–205 (PPCTVDKKMV…KGIFPSGLFQ (129 aa)) is 4H. Residues 77 to 381 (PPCTVDKKMV…GRNQNPDLTG (305 aa)) enclose the Cbl-PTB domain. An EF-hand-like region spans residues 206 to 278 (GDTFRITKAD…FEFDIFTRLF (73 aa)). 5 residues coordinate Ca(2+): Asp-259, Thr-261, Asn-263, Tyr-265, and Glu-270. Residues 279 to 381 (QPWSSLLRNW…GRNQNPDLTG (103 aa)) form an SH2-like region. Arg-324 is a binding site for 4-O-phospho-L-tyrosine.

Its function is as follows. Induces early B-lineage lymphomas. The chain is Transforming protein cbl (V-CBL) from Mus musculus (Mouse).